The sequence spans 264 residues: Thymidylate synthase (264 aa).

Position 21 (Arg21) interacts with dUMP. Residue His51 coordinates (6R)-5,10-methylene-5,6,7,8-tetrahydrofolate. 126 to 127 (RR) serves as a coordination point for dUMP. Cys146 serves as the catalytic Nucleophile. DUMP-binding positions include 166–169 (RSCD), Asn177, and 207–209 (HLY). Position 169 (Asp169) interacts with (6R)-5,10-methylene-5,6,7,8-tetrahydrofolate. Residue Ala263 participates in (6R)-5,10-methylene-5,6,7,8-tetrahydrofolate binding.

The protein belongs to the thymidylate synthase family. Bacterial-type ThyA subfamily. Homodimer.

The protein resides in the cytoplasm. It catalyses the reaction dUMP + (6R)-5,10-methylene-5,6,7,8-tetrahydrofolate = 7,8-dihydrofolate + dTMP. Its pathway is pyrimidine metabolism; dTTP biosynthesis. In terms of biological role, catalyzes the reductive methylation of 2'-deoxyuridine-5'-monophosphate (dUMP) to 2'-deoxythymidine-5'-monophosphate (dTMP) while utilizing 5,10-methylenetetrahydrofolate (mTHF) as the methyl donor and reductant in the reaction, yielding dihydrofolate (DHF) as a by-product. This enzymatic reaction provides an intracellular de novo source of dTMP, an essential precursor for DNA biosynthesis. The polypeptide is Thymidylate synthase (Klebsiella pneumoniae subsp. pneumoniae (strain ATCC 700721 / MGH 78578)).